The following is a 308-amino-acid chain: RNA pseudouridylate synthase domain-containing protein 1 (308 aa).

An N-acetylmethionine modification is found at Met-1. The active site involves Asp-67. The segment at 257–292 (APDPDPSEGGPGPCSPCTPLPGPGRPPPPPETEVQR) is disordered. Residues 269 to 287 (PCSPCTPLPGPGRPPPPPE) show a composition bias toward pro residues.

Belongs to the pseudouridine synthase RluA family.

This is RNA pseudouridylate synthase domain-containing protein 1 (RPUSD1) from Bos taurus (Bovine).